We begin with the raw amino-acid sequence, 223 residues long: MAGKPVLHYFNARGRMECIRWLLAAAGVEFEEKFIQSPEDLEKLKKDGNLMFDQVPMVEIDGMKLAQTRAILNYIATKYDLYGKDMKERALIDMYSEGILDLTEMIGQLVLCPPDQREAKTALAKDRTKNRYLPAFEKVLKSHGQDYLVGNRLTRVDIHLLEVLLYVEEFDASLLTPFPLLKAFKSRISSLPNVKKFLQPGSQRKPPMDAKQIQEARKAFKIQ.

M1 carries the post-translational modification N-acetylmethionine. A2 is modified (N-acetylalanine; in Glutathione S-transferase A1, N-terminally processed). Positions 3-83 (GKPVLHYFNA…YIATKYDLYG (81 aa)) constitute a GST N-terminal domain. K4 is subject to N6-succinyllysine. Residues Y9, K45, 54–55 (QV), and 67–68 (QT) contribute to the glutathione site. The region spanning 85-208 (DMKERALIDM…QPGSQRKPPM (124 aa)) is the GST C-terminal domain.

It belongs to the GST superfamily. Alpha family. Homodimer. In terms of tissue distribution, expressed in the liver, skin and kidney.

The catalysed reaction is RX + glutathione = an S-substituted glutathione + a halide anion + H(+). It carries out the reaction prostaglandin A2 + glutathione = prostaglandin A2-S-(R)-glutathione. The enzyme catalyses prostaglandin J2 + glutathione = prostaglandin J2-S-(R)-glutathione. It catalyses the reaction (13S)-hydroperoxy-(9Z,11E)-octadecadienoate + 2 glutathione = (13S)-hydroxy-(9Z,11E)-octadecadienoate + glutathione disulfide + H2O. The catalysed reaction is androst-5-ene-3,17-dione = androst-4-ene-3,17-dione. Glutathione S-transferase that catalyzes the nucleophilic attack of the sulfur atom of glutathione on the electrophilic groups of a wide range of exogenous and endogenous compounds. Involved in the formation of glutathione conjugates of both prostaglandin A2 (PGA2) and prostaglandin J2 (PGJ2). It also catalyzes the isomerization of D5-androstene-3,17-dione (AD) into D4-androstene-3,17-dione and may therefore play an important role in hormone biosynthesis. Through its glutathione-dependent peroxidase activity toward the fatty acid hydroperoxide (13S)-hydroperoxy-(9Z,11E)-octadecadienoate/13-HPODE it is also involved in the metabolism of oxidized linoleic acid. This is Glutathione S-transferase A1 (Gsta1) from Mus musculus (Mouse).